Here is a 467-residue protein sequence, read N- to C-terminus: Probable protein phosphatase 2C 6 (467 aa).

The disordered stretch occupies residues 61–81 (VEDDAVAPGRGEEGGEASAVG). Residues 149–457 (LWGHKSICGR…DNISVIVVDL (309 aa)) form the PPM-type phosphatase domain. Positions 205, 206, 386, and 448 each coordinate Mn(2+).

Belongs to the PP2C family. In terms of assembly, interacts with PYL9. The cofactor is Mg(2+). Requires Mn(2+) as cofactor.

It is found in the nucleus. The protein localises to the cytoplasm. The protein resides in the cytosol. The enzyme catalyses O-phospho-L-seryl-[protein] + H2O = L-seryl-[protein] + phosphate. The catalysed reaction is O-phospho-L-threonyl-[protein] + H2O = L-threonyl-[protein] + phosphate. Probable protein phosphatase that may function in abscisic acid (ABA) signaling. The polypeptide is Probable protein phosphatase 2C 6 (Oryza sativa subsp. japonica (Rice)).